A 118-amino-acid polypeptide reads, in one-letter code: Small ribosomal subunit protein uS13 (118 aa).

The interval 94–118 (SLPLRGQRTKTNARTRKGPRKPIRK) is disordered.

Belongs to the universal ribosomal protein uS13 family. In terms of assembly, part of the 30S ribosomal subunit. Forms a loose heterodimer with protein S19. Forms two bridges to the 50S subunit in the 70S ribosome.

Functionally, located at the top of the head of the 30S subunit, it contacts several helices of the 16S rRNA. In the 70S ribosome it contacts the 23S rRNA (bridge B1a) and protein L5 of the 50S subunit (bridge B1b), connecting the 2 subunits; these bridges are implicated in subunit movement. Contacts the tRNAs in the A and P-sites. The chain is Small ribosomal subunit protein uS13 from Shewanella baltica (strain OS223).